A 94-amino-acid polypeptide reads, in one-letter code: Co-chaperonin GroES (94 aa).

The protein belongs to the GroES chaperonin family. As to quaternary structure, heptamer of 7 subunits arranged in a ring. Interacts with the chaperonin GroEL.

It is found in the cytoplasm. Its function is as follows. Together with the chaperonin GroEL, plays an essential role in assisting protein folding. The GroEL-GroES system forms a nano-cage that allows encapsulation of the non-native substrate proteins and provides a physical environment optimized to promote and accelerate protein folding. GroES binds to the apical surface of the GroEL ring, thereby capping the opening of the GroEL channel. This chain is Co-chaperonin GroES, found in Enterococcus faecalis (strain ATCC 700802 / V583).